The chain runs to 725 residues: Dynein axonemal assembly factor 1 (725 aa).

Residues 1–91 (MHPEPSEPAT…EDRGPRMTKS (91 aa)) are disordered. Basic and acidic residues predominate over residues 38–48 (GCKEEINDPKE). Positions 53-67 (SSDTSYHSQQKQSGD) are enriched in polar residues. A compositionally biased stretch (basic and acidic residues) spans 76–86 (HPREDREDRGP). LRR repeat units follow at residues 107 to 129 (ALNDTLYLHFKGFDRIENLEEYT), 130 to 151 (GLRCLWLQSNGIQKIENLEAQT), 152 to 173 (ELRCLFLQMNLLRKIENLEPLQ), 174 to 195 (KLDALNLSNNYIKTIENLSCLP), 196 to 217 (VLNTLQMAHNHLETVEDIQHLQ), and 221 to 242 (RLCVLDLSHNKLSDPEILSILE). The LRRCT domain maps to 256–294 (PVIRQIPNYRRTVTVRLKHLTYLDDRPVFPKDRACAEAW). Over residues 330-345 (RAEERKRQRESQERGE) the composition is skewed to basic and acidic residues. The disordered stretch occupies residues 330–513 (RAEERKRQRE…LGAAREEPTP (184 aa)). Serine 358 carries the post-translational modification Phosphoserine. Composition is skewed to basic and acidic residues over residues 360-408 (EGKE…REDG) and 481-491 (VKGEDGDREPE). Threonine 559 carries the post-translational modification Phosphothreonine. Phosphoserine occurs at positions 562 and 583. The span at 632 to 642 (DLEIRKQDTKS) shows a compositional bias: basic and acidic residues. The tract at residues 632-703 (DLEIRKQDTK…AATPPETCVG (72 aa)) is disordered.

The protein belongs to the DNAAF1 family. Mainly expressed in trachea and testis.

The protein localises to the cell projection. Its subcellular location is the cilium. It is found in the cytoplasm. The protein resides in the cytoskeleton. It localises to the spindle pole. Functionally, cilium-specific protein required for the stability of the ciliary architecture. Plays a role in cytoplasmic preassembly of dynein arms. Involved in regulation of microtubule-based cilia and actin-based brush border microvilli. This chain is Dynein axonemal assembly factor 1 (DNAAF1), found in Homo sapiens (Human).